Here is a 366-residue protein sequence, read N- to C-terminus: Ribosomal RNA large subunit methyltransferase M (366 aa).

S-adenosyl-L-methionine contacts are provided by residues Ser-188, Cys-221–Gly-224, Asp-240, Asp-260, and Asp-277. Lys-306 functions as the Proton acceptor in the catalytic mechanism.

It belongs to the class I-like SAM-binding methyltransferase superfamily. RNA methyltransferase RlmE family. RlmM subfamily. In terms of assembly, monomer.

Its subcellular location is the cytoplasm. The catalysed reaction is cytidine(2498) in 23S rRNA + S-adenosyl-L-methionine = 2'-O-methylcytidine(2498) in 23S rRNA + S-adenosyl-L-homocysteine + H(+). Catalyzes the 2'-O-methylation at nucleotide C2498 in 23S rRNA. The sequence is that of Ribosomal RNA large subunit methyltransferase M from Photorhabdus laumondii subsp. laumondii (strain DSM 15139 / CIP 105565 / TT01) (Photorhabdus luminescens subsp. laumondii).